Consider the following 307-residue polypeptide: Ornithine carbamoyltransferase (307 aa).

Carbamoyl phosphate-binding positions include 53–56 (STRT), Gln-80, Arg-104, and 131–134 (HPCQ). L-ornithine contacts are provided by residues Asn-162, Asp-220, and 224 to 225 (SM). Carbamoyl phosphate contacts are provided by residues 260–261 (CL) and Arg-288.

It belongs to the aspartate/ornithine carbamoyltransferase superfamily. OTCase family.

It localises to the cytoplasm. It carries out the reaction carbamoyl phosphate + L-ornithine = L-citrulline + phosphate + H(+). It participates in amino-acid biosynthesis; L-arginine biosynthesis; L-arginine from L-ornithine and carbamoyl phosphate: step 1/3. In terms of biological role, reversibly catalyzes the transfer of the carbamoyl group from carbamoyl phosphate (CP) to the N(epsilon) atom of ornithine (ORN) to produce L-citrulline. The sequence is that of Ornithine carbamoyltransferase from Nitrosomonas eutropha (strain DSM 101675 / C91 / Nm57).